The primary structure comprises 287 residues: Bifunctional protein FolD (287 aa).

Residues 165 to 167 (GRG), Thr190, and Ile231 contribute to the NADP(+) site.

This sequence belongs to the tetrahydrofolate dehydrogenase/cyclohydrolase family. Homodimer.

It catalyses the reaction (6R)-5,10-methylene-5,6,7,8-tetrahydrofolate + NADP(+) = (6R)-5,10-methenyltetrahydrofolate + NADPH. The enzyme catalyses (6R)-5,10-methenyltetrahydrofolate + H2O = (6R)-10-formyltetrahydrofolate + H(+). It functions in the pathway one-carbon metabolism; tetrahydrofolate interconversion. In terms of biological role, catalyzes the oxidation of 5,10-methylenetetrahydrofolate to 5,10-methenyltetrahydrofolate and then the hydrolysis of 5,10-methenyltetrahydrofolate to 10-formyltetrahydrofolate. The chain is Bifunctional protein FolD from Heliobacterium modesticaldum (strain ATCC 51547 / Ice1).